A 343-amino-acid polypeptide reads, in one-letter code: L-threonine 3-dehydrogenase (343 aa).

Residue C40 coordinates Zn(2+). Residues T42 and H45 each act as charge relay system in the active site. Positions 65, 66, 95, 98, 101, and 109 each coordinate Zn(2+). NAD(+) is bound by residues I177, D197, R202, 264-266 (LGI), and 288-289 (IY).

It belongs to the zinc-containing alcohol dehydrogenase family. In terms of assembly, homotetramer. Requires Zn(2+) as cofactor.

The protein resides in the cytoplasm. It carries out the reaction L-threonine + NAD(+) = (2S)-2-amino-3-oxobutanoate + NADH + H(+). It participates in amino-acid degradation; L-threonine degradation via oxydo-reductase pathway; glycine from L-threonine: step 1/2. Catalyzes the NAD(+)-dependent oxidation of L-threonine to 2-amino-3-ketobutyrate. The chain is L-threonine 3-dehydrogenase from Photobacterium profundum (strain SS9).